Reading from the N-terminus, the 134-residue chain is Replication enhancer protein (134 aa).

This sequence belongs to the geminiviridae replication enhancer protein family. As to quaternary structure, homooligomer. Interacts with the replication-associated protein (REP). Interacts with host proliferating cell nuclear antigen (PCNA). Interacts with host retinoblastoma-related protein 1 (RBR1), and may thereby deregulate the host cell cycle. Oligomerization and interaction with PCNA are necessary for optimal replication enhancement.

Functionally, increases viral DNA accumulation. Enhances infectivity and symptom expression. This chain is Replication enhancer protein, found in Tomato leaf curl virus (strain Australia) (ToLCV).